Reading from the N-terminus, the 251-residue chain is Triosephosphate isomerase (251 aa).

10 to 12 (NWK) provides a ligand contact to substrate. The Electrophile role is filled by H95. E167 acts as the Proton acceptor in catalysis. Residues G173, S213, and 234–235 (GG) each bind substrate.

It belongs to the triosephosphate isomerase family. Homodimer.

It is found in the cytoplasm. It carries out the reaction D-glyceraldehyde 3-phosphate = dihydroxyacetone phosphate. Its pathway is carbohydrate biosynthesis; gluconeogenesis. It participates in carbohydrate degradation; glycolysis; D-glyceraldehyde 3-phosphate from glycerone phosphate: step 1/1. Involved in the gluconeogenesis. Catalyzes stereospecifically the conversion of dihydroxyacetone phosphate (DHAP) to D-glyceraldehyde-3-phosphate (G3P). This chain is Triosephosphate isomerase, found in Acetivibrio thermocellus (strain ATCC 27405 / DSM 1237 / JCM 9322 / NBRC 103400 / NCIMB 10682 / NRRL B-4536 / VPI 7372) (Clostridium thermocellum).